Reading from the N-terminus, the 290-residue chain is Elongation factor Ts (290 aa).

The interval 82–85 (TDFV) is involved in Mg(2+) ion dislocation from EF-Tu.

This sequence belongs to the EF-Ts family.

It localises to the cytoplasm. Associates with the EF-Tu.GDP complex and induces the exchange of GDP to GTP. It remains bound to the aminoacyl-tRNA.EF-Tu.GTP complex up to the GTP hydrolysis stage on the ribosome. This chain is Elongation factor Ts, found in Cellvibrio japonicus (strain Ueda107) (Pseudomonas fluorescens subsp. cellulosa).